Reading from the N-terminus, the 76-residue chain is Alpha/kappa-conotoxin-like pl14.1 (76 aa).

An N-terminal signal peptide occupies residues 1–27; that stretch reads MPSVRSVTCCCLLWMMLSVQLVTPGSP. The propeptide occupies 28-39; the sequence is ATAQLSGQRTAR. Disulfide bonds link cysteine 46–cysteine 61 and cysteine 50–cysteine 63. Asparagine 64 carries the asparagine amide modification. Residues 65–76 constitute a propeptide that is removed on maturation; sequence GKRDVVSSSMAV.

The protein belongs to the conotoxin J superfamily. As to expression, expressed by the venom duct.

The protein localises to the secreted. Its function is as follows. Highly inhibits both nicotinic acetylcholine receptors (neuronal (alpha-3/beta-4) and muscular (alpha-1/beta-1/epsilon/delta) subtypes) and the voltage-gated potassium channel Kv1.6/KCNA6 subtype. This is Alpha/kappa-conotoxin-like pl14.1 from Conus planorbis (Planorbis cone).